The following is a 91-amino-acid chain: Small ribosomal subunit protein uS17 (91 aa).

Belongs to the universal ribosomal protein uS17 family. As to quaternary structure, part of the 30S ribosomal subunit.

Functionally, one of the primary rRNA binding proteins, it binds specifically to the 5'-end of 16S ribosomal RNA. In Psychrobacter cryohalolentis (strain ATCC BAA-1226 / DSM 17306 / VKM B-2378 / K5), this protein is Small ribosomal subunit protein uS17.